The sequence spans 93 residues: Large ribosomal subunit protein eL42 (93 aa).

Residues cysteine 11 and cysteine 14 each contribute to the Zn(2+) site. A C4-type zinc finger spans residues 11-75; the sequence is CPNCDEHHQL…TDLKYRCSEC (65 aa). The interval 24-62 is disordered; sequence KVRSGRSSGMKWDARRTKRANASIGNHGRFSKVPVGNKP. Residues cysteine 72 and cysteine 75 each contribute to the Zn(2+) site.

This sequence belongs to the eukaryotic ribosomal protein eL42 family. As to quaternary structure, part of the 50S ribosomal subunit. The cofactor is Zn(2+).

Its function is as follows. Binds to the 23S rRNA. The sequence is that of Large ribosomal subunit protein eL42 from Halobacterium salinarum (strain ATCC 700922 / JCM 11081 / NRC-1) (Halobacterium halobium).